The following is a 100-amino-acid chain: Small ribosomal subunit protein uS14c (100 aa).

The protein belongs to the universal ribosomal protein uS14 family. Part of the 30S ribosomal subunit.

It localises to the plastid. It is found in the chloroplast. In terms of biological role, binds 16S rRNA, required for the assembly of 30S particles. This is Small ribosomal subunit protein uS14c from Amborella trichopoda.